We begin with the raw amino-acid sequence, 216 residues long: Dephospho-CoA kinase (216 aa).

Positions 18 to 216 (IIGVIGPPCS…SELASVLQSK (199 aa)) constitute a DPCK domain. 26–31 (CSGKST) contacts ATP.

It belongs to the CoaE family.

The protein resides in the cytoplasm. It catalyses the reaction 3'-dephospho-CoA + ATP = ADP + CoA + H(+). The protein operates within cofactor biosynthesis; coenzyme A biosynthesis; CoA from (R)-pantothenate: step 5/5. In terms of biological role, catalyzes the phosphorylation of the 3'-hydroxyl group of dephosphocoenzyme A to form coenzyme A. In Rhodopirellula baltica (strain DSM 10527 / NCIMB 13988 / SH1), this protein is Dephospho-CoA kinase.